The chain runs to 520 residues: Ubiquitin carboxyl-terminal hydrolase 3 (520 aa).

The residue at position 1 (Met-1) is an N-acetylmethionine. Residues 1-121 (MECPHLSSSV…QKVREHLQNL (121 aa)) form a UBP-type zinc finger. Residues Cys-3, His-5, Cys-29, Cys-32, Cys-41, Cys-44, Cys-49, His-56, His-60, His-82, Cys-95, and Cys-98 each contribute to the Zn(2+) site. The USP domain maps to 159–511 (TGLRNLGNTC…KAYILFYVEH (353 aa)). Cys-168 (nucleophile) is an active-site residue. The active-site Proton acceptor is His-471.

This sequence belongs to the peptidase C19 family. USP3 subfamily. As to quaternary structure, interacts (via UBP-type domain) with H2A; the interaction is less efficient than with monoubiquitinated H2A. Expressed in all tissues examined, with strongest expression in pancreas.

It is found in the nucleus. Its subcellular location is the cytoplasm. It carries out the reaction Thiol-dependent hydrolysis of ester, thioester, amide, peptide and isopeptide bonds formed by the C-terminal Gly of ubiquitin (a 76-residue protein attached to proteins as an intracellular targeting signal).. Functionally, deubiquitinase that plays a role in several cellular processes including transcriptional regulation, cell cycle progression or innate immunity. In response to DNA damage, deubiquitinates monoubiquitinated target proteins such as histone H2A and H2AX and thereby counteracts RNF168- and RNF8-mediated ubiquitination. In turn, participates in the recruitment of DNA damage repair factors to DNA break sites. Required for proper progression through S phase and subsequent mitotic entry. Acts as a positive regulator of TP53 by deubiquitinating and stabilizing it to promote normal cell proliferation and transformation. Participates in establishing tolerance innate immune memory through non-transcriptional feedback. Mechanistically, negatively regulates TLR-induced NF-kappa-B signaling by targeting and removing the 'Lys-63'-linked polyubiquitin chains on MYD88. Negatively regulates the activation of type I interferon signaling by mediating 'Lys-63'-linked polyubiquitin chains on RIGI and IFIH1. Also deubiquinates ASC/PYCARD, the central adapter mediating the assembly and activation of most inflammasomes, and thereby promotes inflammasome activation. The sequence is that of Ubiquitin carboxyl-terminal hydrolase 3 (USP3) from Homo sapiens (Human).